A 400-amino-acid chain; its full sequence is Probable glycosyltransferase WbjE (400 aa).

The protein belongs to the glycosyltransferase group 1 family. Glycosyltransferase 4 subfamily.

Its pathway is bacterial outer membrane biogenesis; LPS O-antigen biosynthesis. The chain is Probable glycosyltransferase WbjE (wbjE) from Pseudomonas aeruginosa.